The chain runs to 866 residues: Protein SEY1 (866 aa).

Over 1-746 the chain is Cytoplasmic; the sequence is MVSNGHFAYA…KRSAIGGMTQ (746 aa). A GB1/RHD3-type G domain is found at 48-305; that stretch reads GFNYHLISVF…IPADGFAVYA (258 aa). 58–65 lines the GTP pocket; the sequence is GSQSTGKS. The stretch at 480–506 forms a coiled coil; sequence SNYTQELALYQKDLEKISAQLRKDEMR. Residues 747–767 traverse the membrane as a helical segment; it reads IPVYFYILLLALGWNEIIAVL. The Lumenal segment spans residues 768–770; that stretch reads RNP. The helical transmembrane segment at 771-791 threads the bilayer; the sequence is VYFFMLFLCSVAAYIIYQLNL. At 792 to 866 the chain is on the cytoplasmic side; the sequence is WGPMVKMAEA…DDEVEGEETW (75 aa). The tract at residues 840 to 866 is disordered; sequence SHVRSGRNATKINERDDDDEVEGEETW. The segment covering 854-866 has biased composition (acidic residues); it reads RDDDDEVEGEETW.

It belongs to the TRAFAC class dynamin-like GTPase superfamily. GB1/RHD3 GTPase family. RHD3 subfamily.

The protein localises to the endoplasmic reticulum membrane. Cooperates with the reticulon proteins and tubule-shaping DP1 family proteins to generate and maintain the structure of the tubular endoplasmic reticulum network. Has GTPase activity, which is required for its function in ER organization. The chain is Protein SEY1 from Coccidioides immitis (strain RS) (Valley fever fungus).